Consider the following 227-residue polypeptide: Cytochrome c oxidase subunit 2 (227 aa).

The Mitochondrial intermembrane segment spans residues M1 to S14. Residues P15–M45 form a helical membrane-spanning segment. The Mitochondrial matrix segment spans residues L46–Q59. A helical transmembrane segment spans residues E60–M87. Topologically, residues D88–I227 are mitochondrial intermembrane. 6 residues coordinate Cu cation: H161, C196, E198, C200, H204, and M207. Residue E198 participates in Mg(2+) binding.

It belongs to the cytochrome c oxidase subunit 2 family. Component of the cytochrome c oxidase (complex IV, CIV), a multisubunit enzyme composed of 14 subunits. The complex is composed of a catalytic core of 3 subunits MT-CO1, MT-CO2 and MT-CO3, encoded in the mitochondrial DNA, and 11 supernumerary subunits COX4I, COX5A, COX5B, COX6A, COX6B, COX6C, COX7A, COX7B, COX7C, COX8 and NDUFA4, which are encoded in the nuclear genome. The complex exists as a monomer or a dimer and forms supercomplexes (SCs) in the inner mitochondrial membrane with NADH-ubiquinone oxidoreductase (complex I, CI) and ubiquinol-cytochrome c oxidoreductase (cytochrome b-c1 complex, complex III, CIII), resulting in different assemblies (supercomplex SCI(1)III(2)IV(1) and megacomplex MCI(2)III(2)IV(2)). Found in a complex with TMEM177, COA6, COX18, COX20, SCO1 and SCO2. Interacts with TMEM177 in a COX20-dependent manner. Interacts with COX20. Interacts with COX16. The cofactor is Cu cation.

It localises to the mitochondrion inner membrane. It catalyses the reaction 4 Fe(II)-[cytochrome c] + O2 + 8 H(+)(in) = 4 Fe(III)-[cytochrome c] + 2 H2O + 4 H(+)(out). In terms of biological role, component of the cytochrome c oxidase, the last enzyme in the mitochondrial electron transport chain which drives oxidative phosphorylation. The respiratory chain contains 3 multisubunit complexes succinate dehydrogenase (complex II, CII), ubiquinol-cytochrome c oxidoreductase (cytochrome b-c1 complex, complex III, CIII) and cytochrome c oxidase (complex IV, CIV), that cooperate to transfer electrons derived from NADH and succinate to molecular oxygen, creating an electrochemical gradient over the inner membrane that drives transmembrane transport and the ATP synthase. Cytochrome c oxidase is the component of the respiratory chain that catalyzes the reduction of oxygen to water. Electrons originating from reduced cytochrome c in the intermembrane space (IMS) are transferred via the dinuclear copper A center (CU(A)) of subunit 2 and heme A of subunit 1 to the active site in subunit 1, a binuclear center (BNC) formed by heme A3 and copper B (CU(B)). The BNC reduces molecular oxygen to 2 water molecules using 4 electrons from cytochrome c in the IMS and 4 protons from the mitochondrial matrix. The protein is Cytochrome c oxidase subunit 2 (MT-CO2) of Berylmys bowersi (Bower's white-toothed rat).